A 1222-amino-acid polypeptide reads, in one-letter code: A disintegrin and metalloproteinase with thrombospondin motifs 16 (1222 aa).

The signal sequence occupies residues 1–20 (MESRGCAALWVLLLAQVSEQ). Positions 21 to 277 (QTPACALGLA…EYKPSSRHKR (257 aa)) are excised as a propeptide. N-linked (GlcNAc...) asparagine glycosylation is found at Asn-154 and Asn-190. A Cysteine switch motif is present at residues 245 to 253 (HFCGRRKKY). Cys-247 lines the Zn(2+) pocket. Residues 288–493 (LNVETLVVVD…AQAICLADQP (206 aa)) enclose the Peptidase M12B domain. Asn-308 carries an N-linked (GlcNAc...) asparagine glycan. 11 disulfide bridges follow: Cys-364–Cys-415, Cys-390–Cys-397, Cys-409–Cys-488, Cys-448–Cys-472, Cys-516–Cys-541, Cys-527–Cys-548, Cys-536–Cys-567, Cys-561–Cys-572, Cys-596–Cys-633, Cys-600–Cys-638, and Cys-611–Cys-623. Residue His-431 coordinates Zn(2+). Residue Glu-432 is part of the active site. The Zn(2+) site is built by His-435 and His-441. A Disintegrin domain is found at 494–583 (KPVKEYKYPE…KYGDEGPKPT (90 aa)). Residues 584–639 (HGHWSDWSPWSPCSRTCGGGISHRDRLCTNPRPSHGGKFCQGSTRTLKLCNSQRCP) form the TSP type-1 1 domain. Asn-739, Asn-778, Asn-825, Asn-833, Asn-903, and Asn-933 each carry an N-linked (GlcNAc...) asparagine glycan. Residues 745–871 (THRGLYSKHH…KTPAAQPSYS (127 aa)) form a spacer region. TSP type-1 domains follow at residues 872-920 (WAIV…LVPC), 925-985 (CPSS…QSCP), 986-1046 (PAWS…KRCH), 1049-1113 (KKLQ…IPCP), and 1125-1179 (RGSW…HFCP). The 38-residue stretch at 1184–1221 (RGTFCKDLFHWCYLVPQHGMCGHRFYSKQCCNTCSKSN) folds into the PLAC domain.

Zn(2+) is required as a cofactor. The precursor is cleaved by a furin endopeptidase. In terms of processing, glycosylated. Can be O-fucosylated by POFUT2 on a serine or a threonine residue found within the consensus sequence C1-X(2)-(S/T)-C2-G of the TSP type-1 repeat domains where C1 and C2 are the first and second cysteine residue of the repeat, respectively. Fucosylated repeats can then be further glycosylated by the addition of a beta-1,3-glucose residue by the glucosyltransferase, B3GALTL. Fucosylation mediates the efficient secretion of ADAMTS family members. Can also be C-glycosylated with one or two mannose molecules on tryptophan residues within the consensus sequence W-X-X-W of the TPRs, and N-glycosylated. These other glycosylations can also facilitate secretion.

The protein resides in the secreted. The protein localises to the extracellular space. Its subcellular location is the extracellular matrix. The sequence is that of A disintegrin and metalloproteinase with thrombospondin motifs 16 (Adamts16) from Mus musculus (Mouse).